The sequence spans 360 residues: Protein Wnt-2 (360 aa).

Residues 1–25 (MNAPLGGIWLWLPLLLTWLSPEVSS) form the signal peptide. 11 disulfides stabilise this stretch: cysteine 76–cysteine 87, cysteine 127–cysteine 135, cysteine 137–cysteine 157, cysteine 206–cysteine 220, cysteine 208–cysteine 215, cysteine 278–cysteine 309, cysteine 294–cysteine 304, cysteine 308–cysteine 348, cysteine 324–cysteine 339, cysteine 326–cysteine 336, and cysteine 331–cysteine 332. Residue serine 212 is the site of O-palmitoleoyl serine; by PORCN attachment. Residue asparagine 295 is glycosylated (N-linked (GlcNAc...) asparagine).

It belongs to the Wnt family. Palmitoleoylation is required for efficient binding to frizzled receptors. Depalmitoleoylation leads to Wnt signaling pathway inhibition.

The protein resides in the secreted. It localises to the extracellular space. The protein localises to the extracellular matrix. In terms of biological role, ligand for members of the frizzled family of seven transmembrane receptors. Probable developmental protein. May be a signaling molecule which affects the development of discrete regions of tissues. Is likely to signal over only few cell diameters. This Carollia perspicillata (Seba's short-tailed bat) protein is Protein Wnt-2 (WNT2).